The primary structure comprises 486 residues: Ribulose bisphosphate carboxylase large chain 1 (486 aa).

Positions 125 and 175 each coordinate substrate. The active-site Proton acceptor is Lys-177. Position 179 (Lys-179) interacts with substrate. Mg(2+) contacts are provided by Lys-203, Asp-205, and Glu-206. Lys-203 carries the post-translational modification N6-carboxylysine. His-295 acts as the Proton acceptor in catalysis. Residues Arg-296, His-328, and Ser-380 each contribute to the substrate site.

The protein belongs to the RuBisCO large chain family. Type I subfamily. Heterohexadecamer of 8 large chains and 8 small chains. The cofactor is Mg(2+).

It carries out the reaction 2 (2R)-3-phosphoglycerate + 2 H(+) = D-ribulose 1,5-bisphosphate + CO2 + H2O. It catalyses the reaction D-ribulose 1,5-bisphosphate + O2 = 2-phosphoglycolate + (2R)-3-phosphoglycerate + 2 H(+). Its function is as follows. RuBisCO catalyzes two reactions: the carboxylation of D-ribulose 1,5-bisphosphate, the primary event in carbon dioxide fixation, as well as the oxidative fragmentation of the pentose substrate. Both reactions occur simultaneously and in competition at the same active site. The chain is Ribulose bisphosphate carboxylase large chain 1 from Bradyrhizobium sp. (strain ORS 278).